Here is a 96-residue protein sequence, read N- to C-terminus: Co-chaperonin GroES (96 aa).

Belongs to the GroES chaperonin family. In terms of assembly, heptamer of 7 subunits arranged in a ring. Interacts with the chaperonin GroEL.

The protein localises to the cytoplasm. In terms of biological role, together with the chaperonin GroEL, plays an essential role in assisting protein folding. The GroEL-GroES system forms a nano-cage that allows encapsulation of the non-native substrate proteins and provides a physical environment optimized to promote and accelerate protein folding. GroES binds to the apical surface of the GroEL ring, thereby capping the opening of the GroEL channel. The chain is Co-chaperonin GroES from Wolbachia sp. subsp. Drosophila simulans (strain wRi).